Here is a 307-residue protein sequence, read N- to C-terminus: MGNHNINAEEIALYDRQIRLWGFNAQQALKQSRVLLITASPLANEIAKNLVLSGIGKLCVLDSMTVYEKDVEEQFFIEASDIGQLRANVFKKKLHELNPLVEIDTDTSLISEIDEGKISKFSMVIATQLDYEEFCRINELTRICNASFYATSCFGLYGFAFCDLINHNFAIDRVVDNTKVEEDMFIVQKPMKEAFQSILGETLKPRLAKKIPTLYPAMLSLLKSKKSDPDSIRQVCIEQKLNEKTVLNGEFLSKFSSNISFQWTPVMSVVGGVVSQDALNSISKKQFPIDNFWIFDAESGLAPIYRL.

Its function is as follows. Could be involved in a ubiquitin-related process important for DNA damage tolerance. Acts in a process which is defective in the checkpoint rad mutants and which involves hus5. The sequence is that of DNA damage tolerance protein rad31 (rad31) from Schizosaccharomyces pombe (strain 972 / ATCC 24843) (Fission yeast).